Here is a 95-residue protein sequence, read N- to C-terminus: Large ribosomal subunit protein uL23 (95 aa).

Belongs to the universal ribosomal protein uL23 family. In terms of assembly, part of the 50S ribosomal subunit. Contacts protein L29, and trigger factor when it is bound to the ribosome.

Functionally, one of the early assembly proteins it binds 23S rRNA. One of the proteins that surrounds the polypeptide exit tunnel on the outside of the ribosome. Forms the main docking site for trigger factor binding to the ribosome. The sequence is that of Large ribosomal subunit protein uL23 from Solibacter usitatus (strain Ellin6076).